The sequence spans 304 residues: 4-diphosphocytidyl-2-C-methyl-D-erythritol kinase (304 aa).

Lysine 20 is an active-site residue. ATP is bound at residue 106–116 (PVASGIGGGSG). The active site involves aspartate 148.

It belongs to the GHMP kinase family. IspE subfamily.

The catalysed reaction is 4-CDP-2-C-methyl-D-erythritol + ATP = 4-CDP-2-C-methyl-D-erythritol 2-phosphate + ADP + H(+). It participates in isoprenoid biosynthesis; isopentenyl diphosphate biosynthesis via DXP pathway; isopentenyl diphosphate from 1-deoxy-D-xylulose 5-phosphate: step 3/6. Functionally, catalyzes the phosphorylation of the position 2 hydroxy group of 4-diphosphocytidyl-2C-methyl-D-erythritol. The polypeptide is 4-diphosphocytidyl-2-C-methyl-D-erythritol kinase (Bartonella bacilliformis (strain ATCC 35685 / KC583 / Herrer 020/F12,63)).